The following is a 780-amino-acid chain: MQRIQLNITGMSCSCCAPNGWNNLPNKLSDFSTLVNSATRVAAINLSEVTQTAEVCEAVRRAALCTDGGEALQRRQADADNARYLLIRLAVAAALFVPLAHLSVMFAVLPSTHFPGWEWMLTALAIPVVTWAAWPFHRVAIHNARYHGASMETLISTGITAATIWSLYTVFGHHQSTEHRGVWRALLGSDAIYFEVAAGITVFVLAGKYYTARAKSHASIALLALAALSAKDAAVLQPDGSEMVIPANELNEQQRFVVRPGQTIAADGLVIDGSATVSMSPITGEAKPVRVNPGAQVIGGTVVLNGRLIVEAAAVGDETQLAGMVRLVEQAQQQNANAQRLADRIASVFVPCVFAVAALTAVGWLIAGSGPDRVFSAAIAVLVIACPCALGLATPTAMMVASGRGAQLGILLKGHESFEATRAVDTVVFDKTGTLTTGQLKVSAVTAAPGWQANEVLQMAATVESASEHAVALAIAASTTHREPVANFRAVPGHGVSGTVAERAVRVGKPSWIASRCNSTTLVTARRNAELRGETAVFVEIDGEQCGVIAVADAVKASAADAVAALHDRGFRTALLTGDNPASAAAVASRIGIDEVIADILPEDKVDVIEQLRDRGHVVAMVGDGINDGPALARADLGMAIGRGTDVAIGAADIILVRDNLDVVPITLDLAAATMRTIKFNMVWAFGYNIAAIPIAAAGLLNPLVAGAAMAFSSFFVVSNSLRLRNFGAILSCGTSRHRTVKRWRCPPPTRLRSTACSPVDASPLRPVAHRTGVKPPTHR.

The 66-residue stretch at 2-67 (QRIQLNITGM…AVRRAALCTD (66 aa)) folds into the HMA domain. Cu(+) is bound by residues Cys13 and Cys16. Helical transmembrane passes span 89-109 (LAVA…FAVL), 114-134 (FPGW…WAAW), 153-173 (TLIS…VFGH), 185-205 (ALLG…VFVL), 348-368 (VFVP…LIAG), and 374-394 (VFSA…GLAT). Residue Asp430 is the 4-aspartylphosphate intermediate of the active site. 2 consecutive transmembrane segments (helical) span residues 680–698 (FNMV…IAAA) and 704–722 (LVAG…SNSL).

The protein belongs to the cation transport ATPase (P-type) (TC 3.A.3) family. Type IB subfamily.

Its subcellular location is the cell membrane. The enzyme catalyses Cu(+)(in) + ATP + H2O = Cu(+)(out) + ADP + phosphate + H(+). Functionally, involved in copper export. The sequence is that of Copper-exporting P-type ATPase (ctpA) from Mycobacterium leprae (strain TN).